Reading from the N-terminus, the 451-residue chain is Trigger factor (451 aa).

In terms of domain architecture, PPIase FKBP-type spans 170–256; that stretch reads DHIATIDYCE…LTALKYKDLP (87 aa).

It belongs to the FKBP-type PPIase family. Tig subfamily.

Its subcellular location is the cytoplasm. It catalyses the reaction [protein]-peptidylproline (omega=180) = [protein]-peptidylproline (omega=0). Its function is as follows. Involved in protein export. Acts as a chaperone by maintaining the newly synthesized protein in an open conformation. Functions as a peptidyl-prolyl cis-trans isomerase. In Treponema denticola (strain ATCC 35405 / DSM 14222 / CIP 103919 / JCM 8153 / KCTC 15104), this protein is Trigger factor.